The primary structure comprises 71 residues: Omega-conotoxin-like CnVIIF (71 aa).

Cystine bridges form between C46-C61, C53-C65, and C60-C70. C70 carries the cysteine amide; in CnVIID modification.

The protein belongs to the conotoxin M superfamily. Expressed by the venom duct.

It localises to the secreted. Omega-conotoxins act at presynaptic membranes, they bind and block voltage-gated calcium channels (Cav). This is Omega-conotoxin-like CnVIIF from Conus consors (Singed cone).